Reading from the N-terminus, the 288-residue chain is Tryptophan 2,3-dioxygenase (288 aa).

Substrate-binding positions include 57–61 (FIIQH), tyrosine 119, and arginine 123. Histidine 246 contributes to the heme binding site. Residue threonine 260 participates in substrate binding.

The protein belongs to the tryptophan 2,3-dioxygenase family. Homotetramer. Heme serves as cofactor.

The enzyme catalyses L-tryptophan + O2 = N-formyl-L-kynurenine. It participates in amino-acid degradation; L-tryptophan degradation via kynurenine pathway; L-kynurenine from L-tryptophan: step 1/2. Its function is as follows. Heme-dependent dioxygenase that catalyzes the oxidative cleavage of the L-tryptophan (L-Trp) pyrrole ring and converts L-tryptophan to N-formyl-L-kynurenine. Catalyzes the oxidative cleavage of the indole moiety. This is Tryptophan 2,3-dioxygenase from Pseudomonas aeruginosa (strain ATCC 15692 / DSM 22644 / CIP 104116 / JCM 14847 / LMG 12228 / 1C / PRS 101 / PAO1).